The following is a 163-amino-acid chain: Cyclic pyranopterin monophosphate synthase (163 aa).

Residues 75–77 (MCH) and 115–116 (ME) each bind substrate. The active site involves Asp-130.

Belongs to the MoaC family. As to quaternary structure, homohexamer; trimer of dimers.

The enzyme catalyses (8S)-3',8-cyclo-7,8-dihydroguanosine 5'-triphosphate = cyclic pyranopterin phosphate + diphosphate. It participates in cofactor biosynthesis; molybdopterin biosynthesis. Functionally, catalyzes the conversion of (8S)-3',8-cyclo-7,8-dihydroguanosine 5'-triphosphate to cyclic pyranopterin monophosphate (cPMP). This is Cyclic pyranopterin monophosphate synthase from Bacillus pumilus (strain SAFR-032).